A 207-amino-acid chain; its full sequence is Holliday junction branch migration complex subunit RuvA (207 aa).

Positions 1 to 63 are domain I; it reads MISSLRGTVL…EDSLQLFGFS (63 aa). Positions 64–142 are domain II; the sequence is GLEQLQVFEL…ACRRPSAPSA (79 aa). The interval 142–146 is flexible linker; the sequence is ARRPS. Residues 147-207 are domain III; sequence APSSVSDSVL…RLGPANQAAR (61 aa).

It belongs to the RuvA family. As to quaternary structure, homotetramer. Forms an RuvA(8)-RuvB(12)-Holliday junction (HJ) complex. HJ DNA is sandwiched between 2 RuvA tetramers; dsDNA enters through RuvA and exits via RuvB. An RuvB hexamer assembles on each DNA strand where it exits the tetramer. Each RuvB hexamer is contacted by two RuvA subunits (via domain III) on 2 adjacent RuvB subunits; this complex drives branch migration. In the full resolvosome a probable DNA-RuvA(4)-RuvB(12)-RuvC(2) complex forms which resolves the HJ.

It is found in the cytoplasm. Functionally, the RuvA-RuvB-RuvC complex processes Holliday junction (HJ) DNA during genetic recombination and DNA repair, while the RuvA-RuvB complex plays an important role in the rescue of blocked DNA replication forks via replication fork reversal (RFR). RuvA specifically binds to HJ cruciform DNA, conferring on it an open structure. The RuvB hexamer acts as an ATP-dependent pump, pulling dsDNA into and through the RuvAB complex. HJ branch migration allows RuvC to scan DNA until it finds its consensus sequence, where it cleaves and resolves the cruciform DNA. The sequence is that of Holliday junction branch migration complex subunit RuvA from Leifsonia xyli subsp. xyli (strain CTCB07).